The sequence spans 577 residues: Laccase-25 (577 aa).

The signal sequence occupies residues 1-22; that stretch reads MTLHWSLLLFIAIALVSSVAQA. 2 Plastocyanin-like domains span residues 30 to 147 and 158 to 313; these read NVGN…PRGG and KEHV…YAGA. N-linked (GlcNAc...) asparagine glycosylation is present at asparagine 33. Histidine 81 and histidine 83 together coordinate Cu cation. An N-linked (GlcNAc...) asparagine glycan is attached at asparagine 109. Residues histidine 126 and histidine 128 each coordinate Cu cation. Asparagine 169, asparagine 203, asparagine 208, asparagine 218, asparagine 332, asparagine 383, asparagine 396, asparagine 404, asparagine 441, and asparagine 459 each carry an N-linked (GlcNAc...) asparagine glycan. Residues 423-560 enclose the Plastocyanin-like 3 domain; that stretch reads DFPDTPPVVF…AMVLEVLDGP (138 aa). The Cu cation site is built by histidine 477, histidine 480, histidine 482, histidine 539, cysteine 540, histidine 541, and histidine 545.

It belongs to the multicopper oxidase family. Cu cation is required as a cofactor.

The protein localises to the secreted. It localises to the extracellular space. The protein resides in the apoplast. It catalyses the reaction 4 hydroquinone + O2 = 4 benzosemiquinone + 2 H2O. In terms of biological role, lignin degradation and detoxification of lignin-derived products. The chain is Laccase-25 (LAC25) from Oryza sativa subsp. japonica (Rice).